Here is a 253-residue protein sequence, read N- to C-terminus: MVSSFTSAPRSGFYYFAQGWKLVSQPGIRRFVILPLLVNILLMGGAFWWLFTQLDVWIPTFMSYVPDWLQWLSYLLWPLAVISVLLVFGYFFSTIANWIAAPFNGLLAEQLEARLTGATPPDTGIFGIMKDVPRIMKREWQKFVWYLPRAIVLLILYFIPGIGQTVAPVLWFLFSAWMLAIQYCDYPFDTHKVPFKEMRTALRTRKITNMQFGALTSLFTMIPLLNLFIMPVAVCGATAMWVDCYRDKHAMWR.

A run of 4 helical transmembrane segments spans residues Phe31–Phe51, Leu75–Ile95, Ile151–Trp171, and Ile222–Val242.

It belongs to the CysZ family.

It is found in the cell inner membrane. In terms of biological role, high affinity, high specificity proton-dependent sulfate transporter, which mediates sulfate uptake. Provides the sulfur source for the cysteine synthesis pathway. This chain is Sulfate transporter CysZ, found in Shigella flexneri.